We begin with the raw amino-acid sequence, 424 residues long: S-adenosylmethionine synthase (424 aa).

H16 is a binding site for ATP. D18 is a Mg(2+) binding site. E44 contacts K(+). Residues E57 and Q100 each contribute to the L-methionine site. A flexible loop region spans residues 100–110 (QSPDIAQGVNT). Residues 175 to 177 (DGK), 251 to 252 (KF), D260, 266 to 267 (RK), A283, and K287 contribute to the ATP site. D260 contacts L-methionine. An L-methionine-binding site is contributed by K291.

This sequence belongs to the AdoMet synthase family. Homotetramer; dimer of dimers. Mg(2+) is required as a cofactor. It depends on K(+) as a cofactor.

The protein resides in the cytoplasm. The enzyme catalyses L-methionine + ATP + H2O = S-adenosyl-L-methionine + phosphate + diphosphate. The protein operates within amino-acid biosynthesis; S-adenosyl-L-methionine biosynthesis; S-adenosyl-L-methionine from L-methionine: step 1/1. Its function is as follows. Catalyzes the formation of S-adenosylmethionine (AdoMet) from methionine and ATP. The overall synthetic reaction is composed of two sequential steps, AdoMet formation and the subsequent tripolyphosphate hydrolysis which occurs prior to release of AdoMet from the enzyme. The polypeptide is S-adenosylmethionine synthase (Nostoc punctiforme (strain ATCC 29133 / PCC 73102)).